A 236-amino-acid polypeptide reads, in one-letter code: Pyridoxine 5'-phosphate synthase (236 aa).

Residue asparagine 6 coordinates 3-amino-2-oxopropyl phosphate. 1-deoxy-D-xylulose 5-phosphate is bound at residue 8–9; it reads DH. Arginine 17 lines the 3-amino-2-oxopropyl phosphate pocket. The Proton acceptor role is filled by histidine 42. Positions 44 and 49 each coordinate 1-deoxy-D-xylulose 5-phosphate. Glutamate 69 acts as the Proton acceptor in catalysis. Threonine 99 is a 1-deoxy-D-xylulose 5-phosphate binding site. The Proton donor role is filled by histidine 190. 3-amino-2-oxopropyl phosphate is bound by residues glycine 191 and 212–213; that span reads GH.

It belongs to the PNP synthase family. As to quaternary structure, homooctamer; tetramer of dimers.

It localises to the cytoplasm. It catalyses the reaction 3-amino-2-oxopropyl phosphate + 1-deoxy-D-xylulose 5-phosphate = pyridoxine 5'-phosphate + phosphate + 2 H2O + H(+). Its pathway is cofactor biosynthesis; pyridoxine 5'-phosphate biosynthesis; pyridoxine 5'-phosphate from D-erythrose 4-phosphate: step 5/5. Its function is as follows. Catalyzes the complicated ring closure reaction between the two acyclic compounds 1-deoxy-D-xylulose-5-phosphate (DXP) and 3-amino-2-oxopropyl phosphate (1-amino-acetone-3-phosphate or AAP) to form pyridoxine 5'-phosphate (PNP) and inorganic phosphate. The protein is Pyridoxine 5'-phosphate synthase of Pelodictyon phaeoclathratiforme (strain DSM 5477 / BU-1).